The following is a 402-amino-acid chain: Glutamate N-acetyltransferase (402 aa).

T151, K178, T189, E267, N397, and T402 together coordinate substrate. T189 serves as the catalytic Nucleophile.

The protein belongs to the ArgJ family. As to quaternary structure, heterotetramer of two alpha and two beta chains.

The protein resides in the cytoplasm. It carries out the reaction N(2)-acetyl-L-ornithine + L-glutamate = N-acetyl-L-glutamate + L-ornithine. The protein operates within amino-acid biosynthesis; L-arginine biosynthesis; L-ornithine and N-acetyl-L-glutamate from L-glutamate and N(2)-acetyl-L-ornithine (cyclic): step 1/1. Functionally, catalyzes the transfer of the acetyl group from N(2)-acetylornithine to glutamate, forming N-acetylglutamate and L-ornithine. The chain is Glutamate N-acetyltransferase from Methanothermobacter thermautotrophicus (strain ATCC 29096 / DSM 1053 / JCM 10044 / NBRC 100330 / Delta H) (Methanobacterium thermoautotrophicum).